The chain runs to 734 residues: Ribosomal RNA large subunit methyltransferase K/L (734 aa).

One can recognise a THUMP domain in the interval 49 to 167 (HAYRICMWSR…KTEHTYCLDL (119 aa)).

The protein belongs to the methyltransferase superfamily. RlmKL family.

The protein resides in the cytoplasm. It catalyses the reaction guanosine(2445) in 23S rRNA + S-adenosyl-L-methionine = N(2)-methylguanosine(2445) in 23S rRNA + S-adenosyl-L-homocysteine + H(+). The enzyme catalyses guanosine(2069) in 23S rRNA + S-adenosyl-L-methionine = N(2)-methylguanosine(2069) in 23S rRNA + S-adenosyl-L-homocysteine + H(+). Functionally, specifically methylates the guanine in position 2445 (m2G2445) and the guanine in position 2069 (m7G2069) of 23S rRNA. The polypeptide is Ribosomal RNA large subunit methyltransferase K/L (Acinetobacter baumannii (strain SDF)).